A 434-amino-acid polypeptide reads, in one-letter code: Nicotinate phosphoribosyltransferase (434 aa).

Residue histidine 242 is modified to Phosphohistidine; by autocatalysis.

It belongs to the NAPRTase family. Transiently phosphorylated on a His residue during the reaction cycle. Phosphorylation strongly increases the affinity for substrates and increases the rate of nicotinate D-ribonucleotide production. Dephosphorylation regenerates the low-affinity form of the enzyme, leading to product release.

The catalysed reaction is nicotinate + 5-phospho-alpha-D-ribose 1-diphosphate + ATP + H2O = nicotinate beta-D-ribonucleotide + ADP + phosphate + diphosphate. It participates in cofactor biosynthesis; NAD(+) biosynthesis; nicotinate D-ribonucleotide from nicotinate: step 1/1. In terms of biological role, catalyzes the synthesis of beta-nicotinate D-ribonucleotide from nicotinate and 5-phospho-D-ribose 1-phosphate at the expense of ATP. In Agrobacterium fabrum (strain C58 / ATCC 33970) (Agrobacterium tumefaciens (strain C58)), this protein is Nicotinate phosphoribosyltransferase.